Consider the following 157-residue polypeptide: Protein Smg homolog (157 aa).

The protein belongs to the Smg family.

The sequence is that of Protein Smg homolog from Shewanella piezotolerans (strain WP3 / JCM 13877).